A 277-amino-acid polypeptide reads, in one-letter code: 2-dehydro-3-deoxyphosphooctonate aldolase (277 aa).

Belongs to the KdsA family.

Its subcellular location is the cytoplasm. The catalysed reaction is D-arabinose 5-phosphate + phosphoenolpyruvate + H2O = 3-deoxy-alpha-D-manno-2-octulosonate-8-phosphate + phosphate. It participates in carbohydrate biosynthesis; 3-deoxy-D-manno-octulosonate biosynthesis; 3-deoxy-D-manno-octulosonate from D-ribulose 5-phosphate: step 2/3. The protein operates within bacterial outer membrane biogenesis; lipopolysaccharide biosynthesis. This Brucella abortus (strain S19) protein is 2-dehydro-3-deoxyphosphooctonate aldolase.